The following is a 547-amino-acid chain: Chaperonin GroEL (547 aa).

Residues T30–P33, K51, D87–T91, G415, N479–A481, and D495 contribute to the ATP site.

This sequence belongs to the chaperonin (HSP60) family. Forms a cylinder of 14 subunits composed of two heptameric rings stacked back-to-back. Interacts with the co-chaperonin GroES.

Its subcellular location is the cytoplasm. The enzyme catalyses ATP + H2O + a folded polypeptide = ADP + phosphate + an unfolded polypeptide.. In terms of biological role, together with its co-chaperonin GroES, plays an essential role in assisting protein folding. The GroEL-GroES system forms a nano-cage that allows encapsulation of the non-native substrate proteins and provides a physical environment optimized to promote and accelerate protein folding. This Enterobacter sp. (strain 638) protein is Chaperonin GroEL.